Consider the following 201-residue polypeptide: ATP-dependent Clp protease proteolytic subunit (201 aa).

Ser98 serves as the catalytic Nucleophile. His123 is an active-site residue.

Belongs to the peptidase S14 family. Fourteen ClpP subunits assemble into 2 heptameric rings which stack back to back to give a disk-like structure with a central cavity, resembling the structure of eukaryotic proteasomes.

The protein localises to the cytoplasm. The enzyme catalyses Hydrolysis of proteins to small peptides in the presence of ATP and magnesium. alpha-casein is the usual test substrate. In the absence of ATP, only oligopeptides shorter than five residues are hydrolyzed (such as succinyl-Leu-Tyr-|-NHMec, and Leu-Tyr-Leu-|-Tyr-Trp, in which cleavage of the -Tyr-|-Leu- and -Tyr-|-Trp bonds also occurs).. Its function is as follows. Cleaves peptides in various proteins in a process that requires ATP hydrolysis. Has a chymotrypsin-like activity. Plays a major role in the degradation of misfolded proteins. The sequence is that of ATP-dependent Clp protease proteolytic subunit from Rickettsia peacockii (strain Rustic).